The primary structure comprises 399 residues: Arylacetamide deacetylase (399 aa).

The Cytoplasmic portion of the chain corresponds to 1-4; sequence MRKK. Residues 5–25 form a helical; Signal-anchor for type II membrane protein membrane-spanning segment; sequence YFGFLILGVLLAGYIYVPLPD. The Lumenal segment spans residues 26–399; the sequence is NVEEPWKIML…QYINWLHENL (374 aa). The Involved in the stabilization of the negatively charged intermediate by the formation of the oxyanion hole signature appears at 111–113; it reads HGG. Cysteine 116 and cysteine 340 form a disulfide bridge. The active site involves serine 189. An N-linked (GlcNAc...) asparagine glycan is attached at asparagine 282. Catalysis depends on residues aspartate 343 and histidine 373.

This sequence belongs to the 'GDXG' lipolytic enzyme family.

It is found in the endoplasmic reticulum membrane. The protein resides in the microsome membrane. The enzyme catalyses a triacylglycerol + H2O = a diacylglycerol + a fatty acid + H(+). In terms of biological role, displays cellular triglyceride lipase activity in liver, increases the levels of intracellular fatty acids derived from the hydrolysis of newly formed triglyceride stores and plays a role in very low-density lipoprotein assembly. Displays serine esterase activity in liver. Deacetylates a variety of arylacetamide substrates, including xenobiotic compounds and procarcinogens, converting them to the primary arylamide compounds and increasing their toxicity. This chain is Arylacetamide deacetylase (AADAC), found in Bos taurus (Bovine).